Consider the following 794-residue polypeptide: Protocadherin beta-6 (794 aa).

The signal sequence occupies residues 1 to 27; that stretch reads MMQTKVQNKKRQVAFFILLMLWGEVGS. Over 28 to 688 the chain is Extracellular; the sequence is ESIQYSVLEE…AQADSLTVYL (661 aa). Cadherin domains follow at residues 34-132, 137-241, 246-345, 350-449, and 454-559; these read VLEE…APEF, MLLK…VPEF, YEAQ…APEL, FISL…APAF, and YTLF…SPFV. N-linked (GlcNAc...) asparagine glycosylation occurs at asparagine 46. The cysteines at positions 95 and 101 are disulfide-linked. N-linked (GlcNAc...) asparagine glycosylation is present at asparagine 183. N-linked (GlcNAc...) asparagine glycosylation occurs at asparagine 416. N-linked (GlcNAc...) asparagine glycosylation is present at asparagine 565. Residues 566–669 form the Cadherin 6 domain; that stretch reads GSAPCTELVP…LVDGFSQPYL (104 aa). Residues 689–709 form a helical membrane-spanning segment; that stretch reads VVALASVSSLFLFSVLLFVAV. Residues 710–794 lie on the Cytoplasmic side of the membrane; sequence RLCRRSRAAS…PTSRNSFPFS (85 aa). The disordered stretch occupies residues 773 to 794; that stretch reads PPQGTEREMEETPTSRNSFPFS. Over residues 784–794 the composition is skewed to polar residues; the sequence is TPTSRNSFPFS.

As to quaternary structure, forms homodimers in trans (molecules expressed by two different cells). Forms promiscuous heterodimers in cis (at the plasma membrane of the same cell) with other protocadherins.

The protein resides in the cell membrane. In terms of biological role, calcium-dependent cell-adhesion protein involved in cells self-recognition and non-self discrimination. Thereby, it is involved in the establishment and maintenance of specific neuronal connections in the brain. This is Protocadherin beta-6 from Homo sapiens (Human).